A 384-amino-acid polypeptide reads, in one-letter code: MKRKIIHVDMDAFFASIEQQDNPEYRGKPVIVGGLSGRGVVSTCSYEARKYGIHSAMPMYMAKKLCPQGIFLPVRRKRYEEVSEQIFRILYDITPFVEPVSIDEAYLDVTHVDKNPEDIALEIKKRVKDATGLTVSVGISYNKFLAKLASDWNKPDGLMVITEDMVPEILKPLPVTKVHGIGEKSAEKLRSIGIETVEDLLKLPQENLIELFGKTGVEIYNRIRGIDERPVETMREIKSIGKEKTLEKDTKNKELLIQHLKEFSEIVSEELIKERLYCRTVTVKIKTADFAVHTKSKTVDKYIRFSEDIYEVAKGILEEWKLEQYVRLIGLSVSNLSPVKYEQLSFLDKRLVKVIKAGNLAEEINKRIGKKIIKKGSELLKDNK.

The UmuC domain maps to 5–182; sequence IIHVDMDAFF…LPVTKVHGIG (178 aa). The Mg(2+) site is built by Asp9, Met10, and Asp103. Residue Glu104 is part of the active site.

It belongs to the DNA polymerase type-Y family. Monomer. Mg(2+) is required as a cofactor.

It localises to the cytoplasm. It catalyses the reaction DNA(n) + a 2'-deoxyribonucleoside 5'-triphosphate = DNA(n+1) + diphosphate. Functionally, poorly processive, error-prone DNA polymerase involved in translesion repair and untargeted mutagenesis. Copies undamaged DNA at stalled replication forks, which arise in vivo from mismatched or misaligned primer ends. These misaligned primers can be extended by PolIV. Exhibits no 3'-5' exonuclease (proofreading) activity. Involved in translesional synthesis. Primer extension fidelity in vitro is temperature-dependent. Inserts a correct base opposite templating bases at 70 degrees Celsius, but at 37 degrees Celsius in addition to correct base pairing, base transitions, transversions and frameshifts can occur. Preferably forms erroneous base pairs C:T. Bypasses 8-oxo-dG oxidative damage by incorporating dATP or dCTP opposite of the damaged DNA template site at both temperatures in vitro. The polypeptide is DNA polymerase IV (Caldanaerobacter subterraneus subsp. tengcongensis (strain DSM 15242 / JCM 11007 / NBRC 100824 / MB4) (Thermoanaerobacter tengcongensis)).